A 190-amino-acid chain; its full sequence is Putative glutathione-dependent formaldehyde-activating enzyme (190 aa).

The CENP-V/GFA domain occupies 19–165 (FKGGKLYCHC…FRKVGLQPYD (147 aa)). The Zn(2+) site is built by Cys-26, Cys-28, Cys-47, Cys-49, Cys-52, Cys-94, and Cys-97.

This sequence belongs to the Gfa family. The cofactor is Zn(2+).

It carries out the reaction S-(hydroxymethyl)glutathione = glutathione + formaldehyde. It participates in one-carbon metabolism; formaldehyde degradation; formate from formaldehyde (glutathione route): step 1/3. Its function is as follows. Catalyzes the condensation of formaldehyde and glutathione to S-hydroxymethylglutathione. This chain is Putative glutathione-dependent formaldehyde-activating enzyme, found in Pyrenophora teres f. teres (strain 0-1) (Barley net blotch fungus).